Consider the following 223-residue polypeptide: Ras-related protein Rab-32 (223 aa).

Position 2 is an N-acetylalanine (Ala2). GTP-binding residues include Val34, Gly35, Lys36, Thr37, Ser38, Ser49, Gln50, Tyr52, and Thr55. Thr37 provides a ligand contact to Mg(2+). A Switch 1 motif is present at residues 46–60 (QLFSQHYRATIGVDF). Mg(2+) is bound at residue Thr55. Residue Ser69 is modified to Phosphoserine. Mg(2+) is bound at residue Asp79. Positions 82, 141, 142, 144, 173, and 174 each coordinate GTP. Residues 82–95 (GQERFGNMTRVYYK) carry the Switch 2 motif. A PKA-RII subunit binding domain region spans residues 176 to 195 (NINIDEATRFLVENMLANQQ). Residues Cys222 and Cys223 are each lipidated (S-geranylgeranyl cysteine).

Belongs to the small GTPase superfamily. Rab family. As to quaternary structure, interacts with ANKRD27. A decreased interaction with ANKRD27 seen in the presence of SGSM2. Interacts with LRRK2 (via N-terminus); this interaction results in stimulation of RAB10 phosphorylation by LRRK2. The cofactor is Mg(2+). Widely expressed with highest levels in liver. Strong expression also found in melanocyte, platelet, mast cell and fibroblast cell lines.

It is found in the mitochondrion. The protein localises to the mitochondrion outer membrane. The protein resides in the cytoplasmic vesicle. Its subcellular location is the phagosome. It localises to the phagosome membrane. It is found in the melanosome. The protein localises to the melanosome membrane. It catalyses the reaction GTP + H2O = GDP + phosphate + H(+). Regulated by guanine the nucleotide exchange factor (GEF) BLOC-3 complex composed of HPS1 and HPS4 which promote the exchange of bound GDP for free GTP. Regulated by the GTPase activating protein (GAP) SGSM2/RUTBC1 which increases the GTP hydrolysis activity. Inhibited by GDP dissociation inhibitors (GDIs) which prevent Rab-GDP dissociation. In terms of biological role, the small GTPases Rab are key regulators of intracellular membrane trafficking, from the formation of transport vesicles to their fusion with membranes. Rabs cycle between an inactive GDP-bound form and an active GTP-bound form that is able to recruit to membranes different set of downstream effectors directly responsible for vesicle formation, movement, tethering and fusion. Also acts as an A-kinase anchoring protein by binding to the type II regulatory subunit of protein kinase A and anchoring it to the mitochondrion. Also involved in synchronization of mitochondrial fission. Plays a role in the maturation of phagosomes that engulf pathogens, such as S.aureus and M.tuberculosis. Plays an important role in the control of melanin production and melanosome biogenesis. In concert with RAB38, regulates the proper trafficking of melanogenic enzymes TYR, TYRP1 and DCT/TYRP2 to melanosomes in melanocytes. Stimulates phosphorylation of RAB10 'Thr-73' by LRRK2. This is Ras-related protein Rab-32 from Mus musculus (Mouse).